The primary structure comprises 295 residues: Protoheme IX farnesyltransferase (295 aa).

Helical transmembrane passes span 9-29 (ITKP…FFLA), 36-56 (FGVF…GCVF), 80-100 (LVSL…GVAL), 108-128 (LAAL…SLYL), 135-155 (GTLV…CAVS), 163-183 (LTLL…IAIF), 209-229 (ILLY…GGYA), 230-250 (GLNY…MAWK), and 265-285 (FVFS…DFQV).

This sequence belongs to the UbiA prenyltransferase family. Protoheme IX farnesyltransferase subfamily.

It is found in the cell inner membrane. It carries out the reaction heme b + (2E,6E)-farnesyl diphosphate + H2O = Fe(II)-heme o + diphosphate. It participates in porphyrin-containing compound metabolism; heme O biosynthesis; heme O from protoheme: step 1/1. In terms of biological role, converts heme B (protoheme IX) to heme O by substitution of the vinyl group on carbon 2 of heme B porphyrin ring with a hydroxyethyl farnesyl side group. This is Protoheme IX farnesyltransferase from Pseudomonas syringae pv. tomato (strain ATCC BAA-871 / DC3000).